The following is a 275-amino-acid chain: Low affinity immunoglobulin gamma Fc region receptor III-A (275 aa).

The N-terminal stretch at 1–23 (MSVWTSRKAAEDNDTSLSSGIRA) is a signal peptide. The Extracellular segment spans residues 24-207 (GLQKAVVTLH…SPSTFPPWHQ (184 aa)). 2 Ig-like C2-type domains span residues 28–92 (AVVT…YTCQ) and 101–192 (PVNL…LRIT). 2 cysteine pairs are disulfide-bonded: Cys49–Cys91 and Cys131–Cys175. Asn65, Asn168, and Asn183 each carry an N-linked (GlcNAc...) asparagine glycan. Residues 208–228 (ITFCLLIGLLFTIDTVMYFSV) traverse the membrane as a helical segment. The Cytoplasmic segment spans residues 229 to 275 (QKGLRRSTADYEEPEVHWSKEPENKTISEEKQSFRSSRANSETPENR). The segment at 237–275 (ADYEEPEVHWSKEPENKTISEEKQSFRSSRANSETPENR) is disordered. A Phosphotyrosine modification is found at Tyr239. Basic and acidic residues predominate over residues 242–261 (PEVHWSKEPENKTISEEKQS). Residues 262 to 275 (FRSSRANSETPENR) show a composition bias toward polar residues.

In terms of assembly, forms a heterooligomeric complex with ITAM-containing signaling subunits FCER1G. Interacts (via transmembrane domain) with signaling subunits; this interaction is a prerequisite for receptor complex expression on the cell surface and intracellular signal transduction. Binds the Fc region of antigen-complexed IgG. In terms of processing, N-glycosylated. Post-translationally, phosphorylated following receptor ligation.

The protein resides in the cell membrane. In terms of biological role, receptor for the invariable Fc fragment of immunoglobulin gamma (IgG). Binds with intermediate affinity to both IgG2a and IgG2b. Can bind to IgG2a and IgG2b monomers. Does not display binding to IgG1 or IgG3. Recognizes neutralizing virus-specific IgGs displayed on the cell surface of infected cells and triggers antibody-dependent cellular cytotoxicity (ADCC). Confers protection to lethal influenza virus infection. On splenic dendritic cells, uptakes antigen immune complexes and efficiently divert them into MHC class I and II antigen presentation pathways to provide for superior priming of CD4-positive and CD8-positive T cell immune responses. Mediates neutrophil activation by IgG complexes redundantly with FCGR2A. Plays a role in promoting bone resorption by enhancing osteoclast differentiation following binding to IgG2a. Also acts as a receptor for the Fc region of immunoglobulin epsilon (IgE). Binds with low affinity to both the a and b allotypes of IgE. Has also been shown to bind to IgE allotype a only but not to allotype b. Binds aggregated IgE but not the monomeric form and bound monomeric IgG is readily displaced by IgE complexes. Binding to IgE promotes macrophage-mediated phagocytosis, antigen presentation to T cells, production of pro-inflammatory cytokines and the late phase of cutaneous allergic reactions. Mediates enhanced ADCC in response to afucosylated IgGs. The chain is Low affinity immunoglobulin gamma Fc region receptor III-A from Cricetulus griseus (Chinese hamster).